Reading from the N-terminus, the 249-residue chain is Probable transcriptional regulatory protein MXAN_4974 (249 aa).

This sequence belongs to the TACO1 family.

The protein localises to the cytoplasm. The protein is Probable transcriptional regulatory protein MXAN_4974 of Myxococcus xanthus (strain DK1622).